The following is a 152-amino-acid chain: Leukocyte-associated immunoglobulin-like receptor 2 (152 aa).

The N-terminal stretch at 1–21 is a signal peptide; sequence MSPHLTALLGLVLCLAQTIHT. Positions 29–117 constitute an Ig-like C2-type domain; that stretch reads PSISAEPGTV…GWSEHSDFLE (89 aa). C49 and C101 form a disulfide bridge. A disordered region spans residues 120-152; it reads VKESSGGPDSPDTEPGSSAGTVPGTEASGFDAP.

The protein localises to the secreted. The protein is Leukocyte-associated immunoglobulin-like receptor 2 (LAIR2) of Homo sapiens (Human).